The primary structure comprises 389 residues: Phospholipid phosphatase-related protein type 2 (389 aa).

Transmembrane regions (helical) follow at residues 14–34 and 66–86; these read IIPCFVFVEILLGELARAFFP and FLGVYSFGLFTTTIFANAGQV. Residue Asn-102 is glycosylated (N-linked (GlcNAc...) asparagine). Helical transmembrane passes span 147-167, 176-196, and 203-223; these read AALCAYAVTYTAMYVTLVFRV, SLCLALLCPAFLVGVVRVAEY, and VLAGFLTGAAIATFLVTCVVH. Residues Ser-236 and Ser-249 each carry the phosphoserine modification. Disordered stretches follow at residues 255–280 and 295–351; these read SVAQEPEGCRSHSTPARLTPSKPQNC and APAM…GRKL. The segment covering 265-278 has biased composition (polar residues); it reads SHSTPARLTPSKPQ. A compositionally biased stretch (pro residues) spans 314-339; the sequence is TPLPLPLPLPAPAPSQGPSPSSPGPG.

The protein belongs to the PA-phosphatase related phosphoesterase family.

The protein resides in the membrane. In Bos taurus (Bovine), this protein is Phospholipid phosphatase-related protein type 2.